Consider the following 519-residue polypeptide: Glutamate--cysteine ligase (519 aa).

Belongs to the glutamate--cysteine ligase type 1 family. Type 1 subfamily.

It catalyses the reaction L-cysteine + L-glutamate + ATP = gamma-L-glutamyl-L-cysteine + ADP + phosphate + H(+). Its pathway is sulfur metabolism; glutathione biosynthesis; glutathione from L-cysteine and L-glutamate: step 1/2. In Yersinia pseudotuberculosis serotype I (strain IP32953), this protein is Glutamate--cysteine ligase.